A 213-amino-acid chain; its full sequence is Heat shock protein 27 (213 aa).

Phosphoserine occurs at positions 58 and 75. Residues Ser71–Thr182 form the sHSP domain. The disordered stretch occupies residues Val157 to Lys213. Residues Gly197–Lys213 show a composition bias toward basic and acidic residues.

This sequence belongs to the small heat shock protein (HSP20) family.

This is Heat shock protein 27 (Hsp27) from Drosophila melanogaster (Fruit fly).